The sequence spans 972 residues: Leucine--tRNA ligase (972 aa).

A 'HIGH' region motif is present at residues 78-89 (PYPSGDGLHVGH). Residues 741-745 (KIGKS) carry the 'KMSKS' region motif. K744 contributes to the ATP binding site.

Belongs to the class-I aminoacyl-tRNA synthetase family.

The protein resides in the cytoplasm. It carries out the reaction tRNA(Leu) + L-leucine + ATP = L-leucyl-tRNA(Leu) + AMP + diphosphate. The polypeptide is Leucine--tRNA ligase (Mycobacterium leprae (strain Br4923)).